We begin with the raw amino-acid sequence, 655 residues long: p-hydroxybenzoic acid efflux pump subunit AaeB (655 aa).

A run of 11 helical transmembrane segments spans residues 13–33, 38–58, 69–89, 93–113, 121–141, 152–172, 370–390, 407–427, 431–451, 459–479, and 482–502; these read FAVKLACAIVLALFIGFHFQL, WAVLTAAIVAAGPAFAAGGEP, LRIIGTFIGCIAALIIIISMI, LLMILVCCVWAGFCTWISSLV, WGLSGYTALIIVITIQTEPLL, EIVIGIGCAILADLLFSPRSI, LFWLWTGWTSGNGAMVMIAVV, FIYGTLAALPLGLLYFLVIIP, QSMLLLCLSLAVLGFFIGIEV, MGALASTINIIVLDNPMTFHF, and FLDSALGQIVGCMLAFIVILL.

It belongs to the aromatic acid exporter ArAE (TC 2.A.85) family.

It localises to the cell inner membrane. In terms of biological role, forms an efflux pump with AaeA. Could function as a metabolic relief valve, allowing to eliminate certain compounds when they accumulate to high levels in the cell. This chain is p-hydroxybenzoic acid efflux pump subunit AaeB, found in Salmonella agona (strain SL483).